The following is a 104-amino-acid chain: L-rhamnose mutarotase (104 aa).

Residue Y18 participates in substrate binding. H22 functions as the Proton donor in the catalytic mechanism. Substrate is bound by residues Y41 and 76–77; that span reads WW.

The protein belongs to the rhamnose mutarotase family. In terms of assembly, homodimer.

The protein resides in the cytoplasm. The catalysed reaction is alpha-L-rhamnose = beta-L-rhamnose. It functions in the pathway carbohydrate metabolism; L-rhamnose metabolism. Functionally, involved in the anomeric conversion of L-rhamnose. The protein is L-rhamnose mutarotase of Yersinia pseudotuberculosis serotype O:1b (strain IP 31758).